The sequence spans 512 residues: ATP synthase subunit alpha (512 aa).

169–176 (GDRQTGKT) serves as a coordination point for ATP.

This sequence belongs to the ATPase alpha/beta chains family. F-type ATPases have 2 components, CF(1) - the catalytic core - and CF(0) - the membrane proton channel. CF(1) has five subunits: alpha(3), beta(3), gamma(1), delta(1), epsilon(1). CF(0) has three main subunits: a(1), b(2) and c(9-12). The alpha and beta chains form an alternating ring which encloses part of the gamma chain. CF(1) is attached to CF(0) by a central stalk formed by the gamma and epsilon chains, while a peripheral stalk is formed by the delta and b chains.

It is found in the cell inner membrane. The catalysed reaction is ATP + H2O + 4 H(+)(in) = ADP + phosphate + 5 H(+)(out). Functionally, produces ATP from ADP in the presence of a proton gradient across the membrane. The alpha chain is a regulatory subunit. The chain is ATP synthase subunit alpha from Dechloromonas aromatica (strain RCB).